Consider the following 766-residue polypeptide: Tripartite terminase subunit 1 (766 aa).

Residues 191-219 (CSVCFEELCVTANQGEAVHRRLLECTCDH) form a C3H1-type zinc finger. 683 to 690 (FSSVFHCG) contacts ATP.

Belongs to the herpesviridae TRM1 protein family. In terms of assembly, associates with TRM2 and TRM3 to form the tripartite terminase complex. Interacts with portal protein.

Its subcellular location is the host nucleus. Its function is as follows. Component of the molecular motor that translocates viral genomic DNA in empty capsid during DNA packaging. Forms a tripartite terminase complex together with TRM2 and TRM3 in the host cytoplasm. Once the complex reaches the host nucleus, it interacts with the capsid portal vertex. This portal forms a ring in which genomic DNA is translocated into the capsid. TRM1 carries an endonuclease activity that plays an important role for the cleavage of concatemeric viral DNA into unit length genomes. The chain is Tripartite terminase subunit 1 from Equus caballus (Horse).